The following is a 240-amino-acid chain: Large ribosomal subunit protein uL1 (240 aa).

This sequence belongs to the universal ribosomal protein uL1 family. Part of the 50S ribosomal subunit.

Binds directly to 23S rRNA. The L1 stalk is quite mobile in the ribosome, and is involved in E site tRNA release. Its function is as follows. Protein L1 is also a translational repressor protein, it controls the translation of the L11 operon by binding to its mRNA. This Streptomyces griseus subsp. griseus (strain JCM 4626 / CBS 651.72 / NBRC 13350 / KCC S-0626 / ISP 5235) protein is Large ribosomal subunit protein uL1.